The chain runs to 648 residues: Macrolide export ATP-binding/permease protein MacB (648 aa).

In terms of domain architecture, ABC transporter spans 6–251 (IRVRGVSRAF…GPSAGWRGAI (246 aa)). ATP is bound at residue 42–49 (GASGSGKS). Helical transmembrane passes span 273-293 (LLTM…SALG), 528-548 (VAVI…LVSV), 572-592 (FLIE…MLAL), and 613-633 (SIIV…FLPA).

It belongs to the ABC transporter superfamily. Macrolide exporter (TC 3.A.1.122) family. Homodimer.

It is found in the cell inner membrane. In terms of biological role, non-canonical ABC transporter that contains transmembrane domains (TMD), which form a pore in the inner membrane, and an ATP-binding domain (NBD), which is responsible for energy generation. Confers resistance against macrolides. The sequence is that of Macrolide export ATP-binding/permease protein MacB from Agrobacterium fabrum (strain C58 / ATCC 33970) (Agrobacterium tumefaciens (strain C58)).